The primary structure comprises 1209 residues: Zinc finger protein 804A (1209 aa).

The segment at 57 to 81 (FYCELCDKQYYKHQEFDNHINSYDH) adopts a C2H2-type zinc-finger fold. A compositionally biased stretch (basic and acidic residues) spans 380 to 394 (VKHNEASTTEVENKN). Disordered stretches follow at residues 380 to 401 (VKHN…TLAP) and 792 to 860 (PEEF…MKPQ). The span at 807–819 (KPKKKRRRKRGRF) shows a compositional bias: basic residues. Composition is skewed to basic and acidic residues over residues 826 to 836 (LELKENTDYPV) and 848 to 860 (LISE…MKPQ).

This is Zinc finger protein 804A (ZNF804A) from Homo sapiens (Human).